The sequence spans 498 residues: ATP synthase subunit beta, chloroplastic (498 aa).

Residue 172–179 (GGAGVGKT) coordinates ATP.

Belongs to the ATPase alpha/beta chains family. In terms of assembly, F-type ATPases have 2 components, CF(1) - the catalytic core - and CF(0) - the membrane proton channel. CF(1) has five subunits: alpha(3), beta(3), gamma(1), delta(1), epsilon(1). CF(0) has four main subunits: a(1), b(1), b'(1) and c(9-12).

The protein resides in the plastid. It is found in the chloroplast thylakoid membrane. The enzyme catalyses ATP + H2O + 4 H(+)(in) = ADP + phosphate + 5 H(+)(out). Produces ATP from ADP in the presence of a proton gradient across the membrane. The catalytic sites are hosted primarily by the beta subunits. The polypeptide is ATP synthase subunit beta, chloroplastic (Elaeis oleifera (American oil palm)).